The following is a 518-amino-acid chain: GMP synthase [glutamine-hydrolyzing] (518 aa).

Residues 6 to 200 (RLLIIDFGSQ…FVRLAGFKGD (195 aa)) enclose the Glutamine amidotransferase type-1 domain. Cys-84 acts as the Nucleophile in catalysis. Catalysis depends on residues His-175 and Glu-177. One can recognise a GMPS ATP-PPase domain in the interval 201–393 (WTMGAYREEA…LGLPESFIGR (193 aa)). 228–234 (SGGVDSS) lines the ATP pocket.

Homodimer.

The enzyme catalyses XMP + L-glutamine + ATP + H2O = GMP + L-glutamate + AMP + diphosphate + 2 H(+). It participates in purine metabolism; GMP biosynthesis; GMP from XMP (L-Gln route): step 1/1. Functionally, catalyzes the synthesis of GMP from XMP. This Cereibacter sphaeroides (strain ATCC 17023 / DSM 158 / JCM 6121 / CCUG 31486 / LMG 2827 / NBRC 12203 / NCIMB 8253 / ATH 2.4.1.) (Rhodobacter sphaeroides) protein is GMP synthase [glutamine-hydrolyzing].